Consider the following 530-residue polypeptide: Protein transport protein SEC9 (530 aa).

Positions 1 to 274 (MGIKKMFQKK…QPANDYNLDL (274 aa)) are disordered. Basic and acidic residues predominate over residues 8–22 (QKKEPTEQEIREELS). Low complexity-rich tracts occupy residues 61–100 (NPYA…NNGG) and 122–141 (GSSP…SSNP). Polar residues predominate over residues 142–160 (YGNNNGSRSSQNTSSPYAK). Positions 161 to 202 (STNNSSYSNSPYSGSTVNNGNRGGHSNNSNSSAGGNPYAAGG) are enriched in low complexity. Polar residues-rich tracts occupy residues 203–228 (RSSQ…RQTQ) and 258–268 (RNQQSSQQPAN). T-SNARE coiled-coil homology domains lie at 313–375 (KFVK…VKEL) and 467–529 (DDME…LNNI).

The protein belongs to the SNAP-25 family.

The protein localises to the membrane. Functionally, late secretory t-SNARE protein required for secretion and proper cytokinesis. Plays an important role in the secretion of virulence-associated extracellular enzymes and vesicle-mediated polarized hyphal growth. In Candida albicans (strain SC5314 / ATCC MYA-2876) (Yeast), this protein is Protein transport protein SEC9 (SEC9).